A 405-amino-acid chain; its full sequence is Adenylosuccinate synthetase (405 aa).

GTP-binding positions include 12–18 (GDEGKGK) and 40–42 (GHT). Catalysis depends on Asp-13, which acts as the Proton acceptor. 2 residues coordinate Mg(2+): Asp-13 and Gly-40. IMP contacts are provided by residues 13-16 (DEGK), 38-41 (NAGH), Thr-121, Arg-135, Gln-213, Thr-228, and Arg-297. The active-site Proton donor is His-41. 293–299 (TTTGRAR) serves as a coordination point for substrate. Residues Arg-299, 325–327 (KMD), and 390–392 (SAG) contribute to the GTP site.

Belongs to the adenylosuccinate synthetase family. As to quaternary structure, homodimer. It depends on Mg(2+) as a cofactor.

It localises to the cytoplasm. The enzyme catalyses IMP + L-aspartate + GTP = N(6)-(1,2-dicarboxyethyl)-AMP + GDP + phosphate + 2 H(+). Its pathway is purine metabolism; AMP biosynthesis via de novo pathway; AMP from IMP: step 1/2. Functionally, plays an important role in the de novo pathway of purine nucleotide biosynthesis. Catalyzes the first committed step in the biosynthesis of AMP from IMP. The protein is Adenylosuccinate synthetase of Deinococcus deserti (strain DSM 17065 / CIP 109153 / LMG 22923 / VCD115).